Reading from the N-terminus, the 1865-residue chain is Dedicator of cytokinesis protein 1 (1865 aa).

In terms of domain architecture, SH3 spans 9-70 (REEKYGVAFY…PASYIHLKEA (62 aa)). In terms of domain architecture, C2 DOCK-type spans 425 to 609 (RNDIYVTLVQ…DSFQISTLVC (185 aa)). One can recognise a DOCKER domain in the interval 1207–1617 (YKEIEREEMY…VEKEYGVRIM (411 aa)). Disordered stretches follow at residues 1619–1716 (SSLD…EFKP) and 1732–1865 (TISP…GIVQ). The span at 1639 to 1666 (PSSSRPLSVASVSSLSSDSTPSRPGSDG) shows a compositional bias: low complexity. The span at 1680-1694 (RSQDKLDKDDLEKEK) shows a compositional bias: basic and acidic residues. At S1681 the chain carries Phosphoserine. The segment at 1687-1695 (KDDLEKEKK) is phosphoinositide-binding. Positions 1695–1704 (KDKKKEKRNS) are enriched in basic residues. Basic and acidic residues predominate over residues 1705–1716 (KHQEIFEKEFKP). A phosphoserine mark is found at S1743, S1751, S1756, S1761, and S1764. Residues 1756-1766 (SVSPSSPSSQQ) show a composition bias toward low complexity. 2 positions are modified to phosphothreonine: T1767 and T1772. Positions 1793–1819 (ADVADVPPPLPLKGSVADYGNLMENQD) are interaction with NCK2 second and third SH3 domain (minor). Residues 1799-1805 (PPPLPLK) carry the SH3-binding; interaction with CRK motif. The tract at residues 1820-1836 (LLGSPTPPPPPPHQRHL) is interaction with NCK2 third SH3 domain (major). The span at 1824-1851 (PTPPPPPPHQRHLPPPLPSKTPPPPPPK) shows a compositional bias: pro residues. Residues 1837–1852 (PPPLPSKTPPPPPPKT) are interaction with NCK2 (minor). The SH3-binding; interaction with CRK motif lies at 1838–1843 (PPLPSK). Positions 1855 to 1865 (KQASVDSGIVQ) are enriched in polar residues. S1858 is subject to Phosphoserine.

Belongs to the DOCK family. As to quaternary structure, interacts with the SH3 domains of CRK and NCK2 via multiple sites. Interacts with nucleotide-free RAC1 via its DOCKER domain. Interacts with ELMO1, ELMO2 and probably ELMO3 via its SH3 domain. Interacts with ADGRB1. Identified in a complex with AUTS2 and ELMO2. In terms of tissue distribution, highly expressed in placenta, lung, kidney, pancreas and ovary. Expressed at intermediate level in thymus, testes and colon.

The protein resides in the cytoplasm. The protein localises to the membrane. Its function is as follows. Involved in cytoskeletal rearrangements required for phagocytosis of apoptotic cells and cell motility. Along with DOCK1, mediates CRK/CRKL regulation of epithelial and endothelial cell spreading and migration on type IV collagen. Functions as a guanine nucleotide exchange factor (GEF), which activates Rac Rho small GTPases by exchanging bound GDP for free GTP. Its GEF activity may be enhanced by ELMO1. The sequence is that of Dedicator of cytokinesis protein 1 (DOCK1) from Homo sapiens (Human).